Reading from the N-terminus, the 207-residue chain is Casparian strip membrane protein 1 (207 aa).

Positions Met1–Glu12 are enriched in polar residues. Positions Met1–Lys20 are disordered. Residues Met1–Gly48 lie on the Cytoplasmic side of the membrane. The chain crosses the membrane as a helical span at residues Leu49–Ile69. At Ala70–Thr98 the chain is on the extracellular side. A helical transmembrane segment spans residues Phe99–Ile119. At Val120–Arg131 the chain is on the cytoplasmic side. The helical transmembrane segment at Val132–Thr152 threads the bilayer. Residues Ala153–Gly184 are Extracellular-facing. The helical transmembrane segment at Ala185 to Phe205 threads the bilayer. Residues Ala206 to Leu207 are Cytoplasmic-facing.

This sequence belongs to the Casparian strip membrane proteins (CASP) family. As to quaternary structure, homodimer and heterodimers.

It is found in the cell membrane. In terms of biological role, regulates membrane-cell wall junctions and localized cell wall deposition. Required for establishment of the Casparian strip membrane domain (CSD) and the subsequent formation of Casparian strips, a cell wall modification of the root endodermis that determines an apoplastic barrier between the intraorganismal apoplasm and the extraorganismal apoplasm and prevents lateral diffusion. This is Casparian strip membrane protein 1 from Cynara cardunculus var. scolymus (Globe artichoke).